The sequence spans 336 residues: Tetraacyldisaccharide 4'-kinase (336 aa).

ATP is bound at residue 60-67 (TVGGTGKT).

Belongs to the LpxK family.

The catalysed reaction is a lipid A disaccharide + ATP = a lipid IVA + ADP + H(+). The protein operates within glycolipid biosynthesis; lipid IV(A) biosynthesis; lipid IV(A) from (3R)-3-hydroxytetradecanoyl-[acyl-carrier-protein] and UDP-N-acetyl-alpha-D-glucosamine: step 6/6. In terms of biological role, transfers the gamma-phosphate of ATP to the 4'-position of a tetraacyldisaccharide 1-phosphate intermediate (termed DS-1-P) to form tetraacyldisaccharide 1,4'-bis-phosphate (lipid IVA). The polypeptide is Tetraacyldisaccharide 4'-kinase (Pseudomonas fluorescens (strain SBW25)).